The primary structure comprises 340 residues: Probable serine acetyltransferase 5 (340 aa).

Low complexity-rich tracts occupy residues 1 to 17 and 54 to 64; these read MLVV…RVAA and PAEVVPAFAPP. Positions 1–67 are disordered; sequence MLVVVARKSS…VPAFAPPESE (67 aa).

Belongs to the transferase hexapeptide repeat family. As to quaternary structure, homomultimer.

It catalyses the reaction L-serine + acetyl-CoA = O-acetyl-L-serine + CoA. It participates in amino-acid biosynthesis; L-cysteine biosynthesis; L-cysteine from L-serine: step 1/2. In Oryza sativa subsp. japonica (Rice), this protein is Probable serine acetyltransferase 5 (SAT5).